The following is a 259-amino-acid chain: Large ribosomal subunit protein uL2m (259 aa).

A disordered region spans residues 234–259 (VAMNPVDHPNGGRTKTPKPERSPGVE). Positions 250–259 (PKPERSPGVE) are enriched in basic and acidic residues.

Belongs to the universal ribosomal protein uL2 family.

It localises to the mitochondrion. This is Large ribosomal subunit protein uL2m (RPL2) from Paramecium tetraurelia.